The primary structure comprises 189 residues: Parkinson disease protein 7 homolog (189 aa).

Residues Cys-46 and Cys-53 are each lipidated (S-palmitoyl cysteine). The residue at position 67 (Tyr-67) is a Phosphotyrosine. The S-palmitoyl cysteine moiety is linked to residue Cys-106. Cys-106 serves as the catalytic Nucleophile. Residue Cys-106 is modified to Cysteine sulfinic acid (-SO2H). The residue at position 106 (Cys-106) is a Cysteine sulfinic acid (-SO2H); alternate. Cys-106 carries the S-palmitoyl cysteine; alternate lipid modification. His-126 is a catalytic residue. Lys-130 participates in a covalent cross-link: Glycyl lysine isopeptide (Lys-Gly) (interchain with G-Cter in SUMO). Residue Lys-148 is modified to N6-acetyllysine. An N6-succinyllysine modification is found at Lys-182.

This sequence belongs to the peptidase C56 family. Homodimer. Deglycase activity does not require glutathione as a cofactor, however, glycated glutathione constitutes a PARK7 substrate. serves as cofactor. Post-translationally, sumoylated on Lys-130 by pias2 or pias4; which is essential for cell-growth promoting activity and transforming activity. In terms of processing, undergoes cleavage of a C-terminal peptide and subsequent activation of protease activity in response to oxidative stress. In terms of tissue distribution, larval brain and gut from 96 hours post-fertilization (hpf). Ubiquitous in adult; most abundant in brain, eye, heart and muscle. Within brain, neuronal expression is widespread, particularly in the cerebellum, medullary reticular formation and diencephalon. Expressed in major forebrain and diencephalic dopaminergic cell groups.

Its subcellular location is the cell membrane. It is found in the cytoplasm. The protein localises to the nucleus. The protein resides in the membrane raft. It localises to the mitochondrion. Its subcellular location is the endoplasmic reticulum. It catalyses the reaction N(omega)-(1-hydroxy-2-oxopropyl)-L-arginyl-[protein] + H2O = lactate + L-arginyl-[protein] + H(+). The enzyme catalyses N(6)-(1-hydroxy-2-oxopropyl)-L-lysyl-[protein] + H2O = lactate + L-lysyl-[protein] + H(+). The catalysed reaction is S-(1-hydroxy-2-oxopropyl)-L-cysteinyl-[protein] + H2O = lactate + L-cysteinyl-[protein] + H(+). It carries out the reaction N(omega)-(1-hydroxy-2-oxoethyl)-L-arginyl-[protein] + H2O = L-arginyl-[protein] + glycolate + H(+). It catalyses the reaction N(6)-(1-hydroxy-2-oxoethyl)-L-lysyl-[protein] + H2O = glycolate + L-lysyl-[protein] + H(+). The enzyme catalyses S-(1-hydroxy-2-oxoethyl)-L-cysteinyl-[protein] + H2O = glycolate + L-cysteinyl-[protein] + H(+). The catalysed reaction is N(2)-(1-hydroxy-2-oxopropyl)-dGTP + H2O = lactate + dGTP + H(+). It carries out the reaction N(2)-(1-hydroxy-2-oxopropyl)-GTP + H2O = lactate + GTP + H(+). It catalyses the reaction N(2)-(1-hydroxy-2-oxopropyl)-GDP + H2O = lactate + GDP + H(+). The enzyme catalyses N(2)-(1-hydroxy-2-oxopropyl)-GMP + H2O = lactate + GMP + H(+). The catalysed reaction is N(2)-(1-hydroxy-2-oxoethyl)-dGTP + H2O = dGTP + glycolate + H(+). It carries out the reaction N(2)-(1-hydroxy-2-oxoethyl)-GTP + H2O = glycolate + GTP + H(+). It catalyses the reaction N(2)-(1-hydroxy-2-oxoethyl)-GDP + H2O = glycolate + GDP + H(+). The enzyme catalyses N(2)-(1-hydroxy-2-oxoethyl)-GMP + H2O = glycolate + GMP + H(+). The catalysed reaction is an N(2)-(1-hydroxy-2-oxopropyl)-guanosine in RNA + H2O = a guanosine in RNA + lactate + H(+). It carries out the reaction an N(2)-(1-hydroxy-2-oxopropyl)-2'-deoxyguanosine in DNA + H2O = a 2'-deoxyguanosine in DNA + lactate + H(+). It catalyses the reaction an N(2)-(1-hydroxy-2-oxoethyl)-guanosine in RNA + H2O = a guanosine in RNA + glycolate + H(+). The enzyme catalyses an N(2)-(1-hydroxy-2-oxoethyl)-2'-deoxyguanosine in DNA + H2O = a 2'-deoxyguanosine in DNA + glycolate + H(+). Functionally, multifunctional protein with controversial molecular function which plays an important role in cell protection against oxidative stress and cell death acting as oxidative stress sensor and redox-sensitive chaperone and protease. It is involved in neuroprotective mechanisms like the stabilization of NFE2L2 and PINK1 proteins, male fertility as a positive regulator of androgen signaling pathway as well as cell growth and transformation through, for instance, the modulation of NF-kappa-B signaling pathway. Has been described as a protein and nucleotide deglycase that catalyzes the deglycation of the Maillard adducts formed between amino groups of proteins or nucleotides and reactive carbonyl groups of glyoxals. But this function is rebuted by other works. As a protein deglycase, repairs methylglyoxal- and glyoxal-glycated proteins, and releases repaired proteins and lactate or glycolate, respectively. Deglycates cysteine, arginine and lysine residues in proteins, and thus reactivates these proteins by reversing glycation by glyoxals. Acts on early glycation intermediates (hemithioacetals and aminocarbinols), preventing the formation of advanced glycation endproducts (AGE) that cause irreversible damage. Also functions as a nucleotide deglycase able to repair glycated guanine in the free nucleotide pool (GTP, GDP, GMP, dGTP) and in DNA and RNA. Is thus involved in a major nucleotide repair system named guanine glycation repair (GG repair), dedicated to reversing methylglyoxal and glyoxal damage via nucleotide sanitization and direct nucleic acid repair. Protects histones from adduction by methylglyoxal, controls the levels of methylglyoxal-derived argininine modifications on chromatin. Displays a very low glyoxalase activity that may reflect its deglycase activity. It is involved in neuroprotective mechanisms as well as cell growth and transformation. Its involvement in protein repair could also explain other unrelated functions. Eliminates hydrogen peroxide and protects cells against hydrogen peroxide-induced cell death. Required for correct mitochondrial morphology and function as well as for autophagy of dysfunctional mitochondria. Regulates astrocyte inflammatory responses, may modulate lipid rafts-dependent endocytosis in astrocytes and neuronal cells. Binds to a number of mRNAs containing multiple copies of GG or CC motifs and partially inhibits their translation but dissociates following oxidative stress. Metal-binding protein able to bind copper as well as toxic mercury ions, enhances the cell protection mechanism against induced metal toxicity. The protein is Parkinson disease protein 7 homolog of Danio rerio (Zebrafish).